We begin with the raw amino-acid sequence, 307 residues long: Acetaldehyde dehydrogenase (307 aa).

12 to 15 provides a ligand contact to NAD(+); the sequence is SGNI. The Acyl-thioester intermediate role is filled by Cys-130. NAD(+) contacts are provided by residues 161–169 and Asn-272; that span reads SVGPGTRQN.

Belongs to the acetaldehyde dehydrogenase family.

It catalyses the reaction acetaldehyde + NAD(+) + CoA = acetyl-CoA + NADH + H(+). The chain is Acetaldehyde dehydrogenase from Shewanella pealeana (strain ATCC 700345 / ANG-SQ1).